Here is a 172-residue protein sequence, read N- to C-terminus: uncharacterized protein (172 aa).

This is an uncharacterized protein from Macaca mulatta (Rhesus macaque).